The following is a 316-amino-acid chain: tRNA dimethylallyltransferase (316 aa).

27 to 34 is a binding site for ATP; the sequence is GATATGKT. A substrate-binding site is contributed by 29–34; sequence TATGKT. The interval 52–55 is interaction with substrate tRNA; sequence DSRQ.

This sequence belongs to the IPP transferase family. As to quaternary structure, monomer. The cofactor is Mg(2+).

The enzyme catalyses adenosine(37) in tRNA + dimethylallyl diphosphate = N(6)-dimethylallyladenosine(37) in tRNA + diphosphate. Its function is as follows. Catalyzes the transfer of a dimethylallyl group onto the adenine at position 37 in tRNAs that read codons beginning with uridine, leading to the formation of N6-(dimethylallyl)adenosine (i(6)A). This chain is tRNA dimethylallyltransferase, found in Treponema pallidum (strain Nichols).